The following is a 186-amino-acid chain: Elongation factor P (186 aa).

The protein belongs to the elongation factor P family.

It is found in the cytoplasm. The protein operates within protein biosynthesis; polypeptide chain elongation. Involved in peptide bond synthesis. Stimulates efficient translation and peptide-bond synthesis on native or reconstituted 70S ribosomes in vitro. Probably functions indirectly by altering the affinity of the ribosome for aminoacyl-tRNA, thus increasing their reactivity as acceptors for peptidyl transferase. This chain is Elongation factor P, found in Shewanella frigidimarina (strain NCIMB 400).